Reading from the N-terminus, the 107-residue chain is Iron-binding protein IscA (107 aa).

Fe cation is bound by residues C35, C99, and C101.

The protein belongs to the HesB/IscA family. In terms of assembly, homodimer; may form tetramers and higher multimers. Requires Fe cation as cofactor.

Is able to transfer iron-sulfur clusters to apo-ferredoxin. Multiple cycles of [2Fe2S] cluster formation and transfer are observed, suggesting that IscA acts catalytically. Recruits intracellular free iron so as to provide iron for the assembly of transient iron-sulfur cluster in IscU in the presence of IscS, L-cysteine and the thioredoxin reductase system TrxA/TrxB. This is Iron-binding protein IscA from Klebsiella pneumoniae subsp. pneumoniae (strain ATCC 700721 / MGH 78578).